A 208-amino-acid polypeptide reads, in one-letter code: Thiamine-phosphate synthase (208 aa).

Residues 36 to 40 and aspartate 68 contribute to the 4-amino-2-methyl-5-(diphosphooxymethyl)pyrimidine site; that span reads QLRMK. Mg(2+)-binding residues include aspartate 69 and aspartate 88. Threonine 107 provides a ligand contact to 4-amino-2-methyl-5-(diphosphooxymethyl)pyrimidine. 133–135 contributes to the 2-[(2R,5Z)-2-carboxy-4-methylthiazol-5(2H)-ylidene]ethyl phosphate binding site; the sequence is TTT. A 4-amino-2-methyl-5-(diphosphooxymethyl)pyrimidine-binding site is contributed by lysine 136. 2-[(2R,5Z)-2-carboxy-4-methylthiazol-5(2H)-ylidene]ethyl phosphate is bound at residue glycine 169.

Belongs to the thiamine-phosphate synthase family. Mg(2+) is required as a cofactor.

It catalyses the reaction 2-[(2R,5Z)-2-carboxy-4-methylthiazol-5(2H)-ylidene]ethyl phosphate + 4-amino-2-methyl-5-(diphosphooxymethyl)pyrimidine + 2 H(+) = thiamine phosphate + CO2 + diphosphate. The enzyme catalyses 2-(2-carboxy-4-methylthiazol-5-yl)ethyl phosphate + 4-amino-2-methyl-5-(diphosphooxymethyl)pyrimidine + 2 H(+) = thiamine phosphate + CO2 + diphosphate. The catalysed reaction is 4-methyl-5-(2-phosphooxyethyl)-thiazole + 4-amino-2-methyl-5-(diphosphooxymethyl)pyrimidine + H(+) = thiamine phosphate + diphosphate. The protein operates within cofactor biosynthesis; thiamine diphosphate biosynthesis; thiamine phosphate from 4-amino-2-methyl-5-diphosphomethylpyrimidine and 4-methyl-5-(2-phosphoethyl)-thiazole: step 1/1. In terms of biological role, condenses 4-methyl-5-(beta-hydroxyethyl)thiazole monophosphate (THZ-P) and 2-methyl-4-amino-5-hydroxymethyl pyrimidine pyrophosphate (HMP-PP) to form thiamine monophosphate (TMP). The chain is Thiamine-phosphate synthase from Phocaeicola vulgatus (strain ATCC 8482 / DSM 1447 / JCM 5826 / CCUG 4940 / NBRC 14291 / NCTC 11154) (Bacteroides vulgatus).